A 280-amino-acid chain; its full sequence is Undecaprenyl-diphosphatase (280 aa).

8 helical membrane-spanning segments follow: residues 3–23, 45–65, 88–108, 115–135, 150–170, 191–211, 225–245, and 255–275; these read IILL…EFLP, VDLF…YDYW, QLGL…FTFA, LFDP…IFYV, VGLK…IPGT, AEFS…LDLL, VLGI…RLLV, and IFAW…WGFG.

This sequence belongs to the UppP family.

The protein localises to the cell inner membrane. It carries out the reaction di-trans,octa-cis-undecaprenyl diphosphate + H2O = di-trans,octa-cis-undecaprenyl phosphate + phosphate + H(+). In terms of biological role, catalyzes the dephosphorylation of undecaprenyl diphosphate (UPP). Confers resistance to bacitracin. The polypeptide is Undecaprenyl-diphosphatase (Psychrobacter arcticus (strain DSM 17307 / VKM B-2377 / 273-4)).